The following is a 579-amino-acid chain: Zinc metalloproteinase nas-11 (579 aa).

The signal sequence occupies residues 1–17 (MTPSLVFLIVVIVVVEG). Residues 18–328 (QGWRPWDRFN…AAPGSSRLKK (311 aa)) constitute a propeptide that is removed on maturation. The disordered stretch occupies residues 35 to 58 (WGGNNWGTRQRNQEPHDIPPPVPP). N-linked (GlcNAc...) asparagine glycosylation is present at asparagine 256. Acidic residues predominate over residues 293 to 312 (GDDEIPLPDADTDDEDDDDS). The segment at 293–323 (GDDEIPLPDADTDDEDDDDSTNSASGAAPGS) is disordered. Residues 329–536 (SALYFEGNLI…IELLKKMYCQ (208 aa)) enclose the Peptidase M12A domain. Cystine bridges form between cysteine 375-cysteine 535, cysteine 401-cysteine 421, cysteine 539-cysteine 575, cysteine 546-cysteine 568, and cysteine 555-cysteine 572. Histidine 430 lines the Zn(2+) pocket. Residue glutamate 431 is part of the active site. Zn(2+) contacts are provided by histidine 434 and histidine 440. Asparagine 454 carries N-linked (GlcNAc...) asparagine glycosylation. Residues 539–575 (CDDKNVYCGAWALKDLCKNPGHDQYMAANCKKSCGLC) form the ShKT domain.

Requires Zn(2+) as cofactor. Expressed in the anterior part of the intestine, CEP neurons and to a lesser extent in hypodermis.

It is found in the secreted. Metalloprotease. The sequence is that of Zinc metalloproteinase nas-11 (nas-11) from Caenorhabditis elegans.